We begin with the raw amino-acid sequence, 1526 residues long: DNA topoisomerase 2-alpha (1526 aa).

Position 1 is an N-acetylmethionine (M1). S4 carries the phosphoserine modification. K17 participates in a covalent cross-link: Glycyl lysine isopeptide (Lys-Gly) (interchain with G-Cter in SUMO2). Residues N90, N118, and 146–148 (SSN) each bind ATP. Glycyl lysine isopeptide (Lys-Gly) (interchain with G-Cter in SUMO2) cross-links involve residues K154 and K155. 159–166 (GRNGYGAK) provides a ligand contact to ATP. The residue at position 280 (T280) is a Phosphothreonine. Positions 340–342 (KKK) are interaction with DNA. K350 is covalently cross-linked (Glycyl lysine isopeptide (Lys-Gly) (interchain with G-Cter in SUMO2)). 374 to 376 (QTK) contributes to the ATP binding site. Glycyl lysine isopeptide (Lys-Gly) (interchain with G-Cter in SUMO2) cross-links involve residues K384, K395, K414, K416, K423, and K438. Positions 453-570 (CTLILTEGDS…SLLRHRFLEE (118 aa)) constitute a Toprim domain. E459 contributes to the Mg(2+) binding site. Glycyl lysine isopeptide (Lys-Gly) (interchain with G-Cter in SUMO2) cross-links involve residues K464, K478, and K527. D539 and D541 together coordinate Mg(2+). Residues K582, K597, K612, K620, K623, K630, K637, K653, K660, and K674 each participate in a glycyl lysine isopeptide (Lys-Gly) (interchain with G-Cter in SUMO2) cross-link. A Topo IIA-type catalytic domain is found at 713–1168 (IPSMVDGLKP…TPSDLWKEDL (456 aa)). Residue Y803 is the O-(5'-phospho-DNA)-tyrosine intermediate of the active site. Positions 988–997 (KLQTSLTCNS) are interaction with DNA. A Glycyl lysine isopeptide (Lys-Gly) (interchain with G-Cter in SUMO2) cross-link involves residue K1073. Basic and acidic residues predominate over residues 1087–1096 (AWKEAQQKVP). The tract at residues 1087–1120 (AWKEAQQKVPEEEENEENEESESESTSPAAESGP) is disordered. Residues 1097–1109 (EEEENEENEESES) are compositionally biased toward acidic residues. Residues K1193 and K1201 each participate in a glycyl lysine isopeptide (Lys-Gly) (interchain with G-Cter in SUMO2) cross-link. At S1210 the chain carries Phosphoserine. The disordered stretch occupies residues 1229–1526 (EKKIRRKIKS…YLEESDDDLF (298 aa)). Residue K1237 forms a Glycyl lysine isopeptide (Lys-Gly) (interchain with G-Cter in SUMO1); alternate linkage. A Glycyl lysine isopeptide (Lys-Gly) (interchain with G-Cter in SUMO2); alternate cross-link involves residue K1237. T1244 is subject to Phosphothreonine. Over residues 1254-1268 (LRQRLEKRQKREPGT) the composition is skewed to basic and acidic residues. Glycyl lysine isopeptide (Lys-Gly) (interchain with G-Cter in SUMO2) cross-links involve residues K1272, K1279, and K1282. A phosphoserine mark is found at S1291, S1293, S1295, and S1298. At T1323 the chain carries Phosphothreonine. A compositionally biased stretch (acidic residues) spans 1326-1346 (LDSDDDFSGLDEKDEDEDFFP). A phosphoserine mark is found at S1328 and S1333. T1350 is subject to Phosphothreonine. Glycyl lysine isopeptide (Lys-Gly) (interchain with G-Cter in SUMO2) cross-links involve residues K1359, K1363, and K1369. Phosphoserine occurs at positions 1370 and 1373. K1381 is covalently cross-linked (Glycyl lysine isopeptide (Lys-Gly) (interchain with G-Cter in SUMO2)). S1383 and S1387 each carry phosphoserine. The span at 1417 to 1427 (TKGQSLTSTAG) shows a compositional bias: polar residues. K1418 is covalently cross-linked (Glycyl lysine isopeptide (Lys-Gly) (interchain with G-Cter in SUMO2); alternate). At K1418 the chain carries N6-acetyllysine; alternate. Residues 1429–1435 (KKRAVPK) are interaction with PLSCR1. K1438 is covalently cross-linked (Glycyl lysine isopeptide (Lys-Gly) (interchain with G-Cter in SUMO2); alternate). N6-acetyllysine; alternate is present on K1438. Residues K1450 and K1455 each participate in a glycyl lysine isopeptide (Lys-Gly) (interchain with G-Cter in SUMO2) cross-link. Phosphoserine occurs at positions 1465, 1467, 1470, and 1472. Glycyl lysine isopeptide (Lys-Gly) (interchain with G-Cter in SUMO2) cross-links involve residues K1480 and K1488. Basic and acidic residues predominate over residues 1487–1498 (LKGEERDFHVDL). Position 1521 is a phosphoserine (S1521).

Belongs to the type II topoisomerase family. In terms of assembly, homodimer. Interacts with COPS5. Interacts with RECQL5; this stimulates DNA decatenation. Interacts with SETMAR; stimulates the topoisomerase activity. Interacts with DHX9; this interaction occurs in a E2 enzyme UBE2I- and RNA-dependent manner, negatively regulates DHX9-mediated double-stranded DNA and RNA duplex helicase activity and stimulates TOP2A-mediated supercoiled DNA relaxation activity. Interacts with HNRNPU (via C-terminus); this interaction protects the topoisomerase TOP2A from degradation and positively regulates the relaxation of supercoiled DNA in a RNA-dependent manner. Interacts with MCM3AP. Interacts with ERCC6. Interacts with PLSCR1. Interacts with GCNA; this interaction allows the resolution of topoisomerase II (TOP2A) DNA-protein cross-links. Interacts with POL1RA/RPA1 (via dock II) and UBTF in the context of Pol I complex; may assist Pol I transcription initiation by releasing supercoils occurring during DNA unwinding. Interacts with TPRN; TPRN interacts with a number of DNA damage response proteins, is recruited to sites of DNA damage and may play a role in DNA damage repair. It depends on Mg(2+) as a cofactor. Mn(2+) serves as cofactor. Ca(2+) is required as a cofactor. In terms of processing, phosphorylation has no effect on catalytic activity.

The protein localises to the cytoplasm. It localises to the nucleus. It is found in the nucleoplasm. The protein resides in the nucleolus. It carries out the reaction ATP-dependent breakage, passage and rejoining of double-stranded DNA.. Its function is as follows. Key decatenating enzyme that alters DNA topology by binding to two double-stranded DNA molecules, generating a double-stranded break in one of the strands, passing the intact strand through the broken strand, and religating the broken strand. May play a role in regulating the period length of BMAL1 transcriptional oscillation. The polypeptide is DNA topoisomerase 2-alpha (Top2a) (Rattus norvegicus (Rat)).